We begin with the raw amino-acid sequence, 957 residues long: Glycine dehydrogenase (decarboxylating) (957 aa).

Position 708 is an N6-(pyridoxal phosphate)lysine (K708).

It belongs to the GcvP family. The glycine cleavage system is composed of four proteins: P, T, L and H. The cofactor is pyridoxal 5'-phosphate.

It catalyses the reaction N(6)-[(R)-lipoyl]-L-lysyl-[glycine-cleavage complex H protein] + glycine + H(+) = N(6)-[(R)-S(8)-aminomethyldihydrolipoyl]-L-lysyl-[glycine-cleavage complex H protein] + CO2. In terms of biological role, the glycine cleavage system catalyzes the degradation of glycine. The P protein binds the alpha-amino group of glycine through its pyridoxal phosphate cofactor; CO(2) is released and the remaining methylamine moiety is then transferred to the lipoamide cofactor of the H protein. The sequence is that of Glycine dehydrogenase (decarboxylating) from Escherichia coli O6:H1 (strain CFT073 / ATCC 700928 / UPEC).